The following is a 248-amino-acid chain: Small ribosomal subunit protein eS6 (248 aa).

A disordered region spans residues valine 215–lysine 248. Residues alanine 223–lysine 248 are compositionally biased toward basic and acidic residues. Residues serine 233, serine 235, serine 239, serine 242, serine 244, and serine 245 each carry the phosphoserine modification.

The protein belongs to the eukaryotic ribosomal protein eS6 family. In terms of assembly, component of the small ribosomal subunit. Part of the small subunit (SSU) processome, composed of more than 70 proteins and the RNA chaperone small nucleolar RNA (snoRNA) U3. In terms of processing, ribosomal protein S6 is the major substrate of protein kinases in eukaryote ribosomes. The phosphorylation is stimulated by growth factors, tumor promoting agents, and mitogens. It is dephosphorylated at growth arrest.

The protein resides in the cytoplasm. It is found in the nucleus. The protein localises to the nucleolus. In terms of biological role, component of the 40S small ribosomal subunit. Plays an important role in controlling cell growth and proliferation through the selective translation of particular classes of mRNA. Part of the small subunit (SSU) processome, first precursor of the small eukaryotic ribosomal subunit. During the assembly of the SSU processome in the nucleolus, many ribosome biogenesis factors, an RNA chaperone and ribosomal proteins associate with the nascent pre-rRNA and work in concert to generate RNA folding, modifications, rearrangements and cleavage as well as targeted degradation of pre-ribosomal RNA by the RNA exosome. The sequence is that of Small ribosomal subunit protein eS6 (RpS6) from Drosophila melanogaster (Fruit fly).